Here is a 470-residue protein sequence, read N- to C-terminus: Cyclin-dependent kinase E-1 (470 aa).

Residues 25–333 (YNLVGKIGEG…ASQALEHEYF (309 aa)) form the Protein kinase domain. ATP-binding positions include 31–39 (IGEGTYGLV) and Lys-55. The residue at position 36 (Tyr-36) is a Phosphotyrosine. The Proton acceptor role is filled by Asp-154. Residues 428-470 (LNPSVPLQQQRGMAQPHQQQQLRRKDPGMGMSGYAPPNKSRRL) are disordered. Positions 432–448 (VPLQQQRGMAQPHQQQQ) are enriched in polar residues.

The protein belongs to the protein kinase superfamily. CMGC Ser/Thr protein kinase family. CDC2/CDKX subfamily. As to quaternary structure, interacts with MED14, HDA19 and LUG. Interacts with KIN10. Expressed in roots, leaves and stems. Expressed in young dividing tissue, such as shoot and root tips, lateral root primordia, young leaves and flowers. Expressed in the inflorescence meristem, inflorescence stem and young flowers.

The protein resides in the nucleus. The catalysed reaction is L-seryl-[protein] + ATP = O-phospho-L-seryl-[protein] + ADP + H(+). It carries out the reaction L-threonyl-[protein] + ATP = O-phospho-L-threonyl-[protein] + ADP + H(+). The enzyme catalyses [DNA-directed RNA polymerase] + ATP = phospho-[DNA-directed RNA polymerase] + ADP + H(+). Functionally, involved in cell differentiation. Required for the specification of stamen and carpel identities and for the proper termination of stem cells in the floral meristem. The polypeptide is Cyclin-dependent kinase E-1 (CDKE-1) (Arabidopsis thaliana (Mouse-ear cress)).